Consider the following 515-residue polypeptide: Histidine ammonia-lyase (515 aa).

A cross-link (5-imidazolinone (Ala-Gly)) is located at residues 148 to 150; the sequence is ASG. At serine 149 the chain carries 2,3-didehydroalanine (Ser).

This sequence belongs to the PAL/histidase family. Post-translationally, contains an active site 4-methylidene-imidazol-5-one (MIO), which is formed autocatalytically by cyclization and dehydration of residues Ala-Ser-Gly.

The protein resides in the cytoplasm. The enzyme catalyses L-histidine = trans-urocanate + NH4(+). It functions in the pathway amino-acid degradation; L-histidine degradation into L-glutamate; N-formimidoyl-L-glutamate from L-histidine: step 1/3. The chain is Histidine ammonia-lyase from Pseudomonas syringae pv. tomato (strain ATCC BAA-871 / DC3000).